The sequence spans 124 residues: Large ribosomal subunit protein bL12 (124 aa).

It belongs to the bacterial ribosomal protein bL12 family. Homodimer. Part of the ribosomal stalk of the 50S ribosomal subunit. Forms a multimeric L10(L12)X complex, where L10 forms an elongated spine to which 2 to 4 L12 dimers bind in a sequential fashion. Binds GTP-bound translation factors.

Functionally, forms part of the ribosomal stalk which helps the ribosome interact with GTP-bound translation factors. Is thus essential for accurate translation. This chain is Large ribosomal subunit protein bL12, found in Xanthobacter autotrophicus (strain ATCC BAA-1158 / Py2).